The sequence spans 105 residues: Fluoride-specific ion channel FluC (105 aa).

The next 3 helical transmembrane spans lie at 14–34 (FPLP…VFVV), 44–64 (LSPL…AFSL), and 79–99 (ALYV…GLWL). Gly-54 and Thr-57 together coordinate Na(+).

It belongs to the fluoride channel Fluc/FEX (TC 1.A.43) family.

Its subcellular location is the cell inner membrane. It carries out the reaction fluoride(in) = fluoride(out). Its activity is regulated as follows. Na(+) is not transported, but it plays an essential structural role and its presence is essential for fluoride channel function. Functionally, fluoride-specific ion channel. Important for reducing fluoride concentration in the cell, thus reducing its toxicity. This chain is Fluoride-specific ion channel FluC, found in Jannaschia sp. (strain CCS1).